We begin with the raw amino-acid sequence, 196 residues long: Pyridoxal 5'-phosphate synthase subunit PdxT (196 aa).

52–54 (GES) is a binding site for L-glutamine. The Nucleophile role is filled by Cys84. Residues Arg113 and 141–142 (IR) contribute to the L-glutamine site. Catalysis depends on charge relay system residues His178 and Glu180.

Belongs to the glutaminase PdxT/SNO family. As to quaternary structure, in the presence of PdxS, forms a dodecamer of heterodimers. Only shows activity in the heterodimer.

It carries out the reaction aldehydo-D-ribose 5-phosphate + D-glyceraldehyde 3-phosphate + L-glutamine = pyridoxal 5'-phosphate + L-glutamate + phosphate + 3 H2O + H(+). The enzyme catalyses L-glutamine + H2O = L-glutamate + NH4(+). The protein operates within cofactor biosynthesis; pyridoxal 5'-phosphate biosynthesis. Its function is as follows. Catalyzes the hydrolysis of glutamine to glutamate and ammonia as part of the biosynthesis of pyridoxal 5'-phosphate. The resulting ammonia molecule is channeled to the active site of PdxS. The polypeptide is Pyridoxal 5'-phosphate synthase subunit PdxT (Pyrococcus horikoshii (strain ATCC 700860 / DSM 12428 / JCM 9974 / NBRC 100139 / OT-3)).